A 146-amino-acid polypeptide reads, in one-letter code: Globin (146 aa).

Position 1 is an N-acetylalanine (Ala-1). The 146-residue stretch at 1 to 146 (ALSAAEAEVV…IIDAMKKAGK (146 aa)) folds into the Globin domain. His-95 is a binding site for heme b.

It belongs to the globin family. As to quaternary structure, monomer.

The chain is Globin from Dolabella auricularia (Shoulderblade sea cat).